A 148-amino-acid chain; its full sequence is Lysozyme C (148 aa).

A signal peptide spans 1 to 18 (MKALTILGLVLLSVTVQG). Residues 19–148 (KIFERCELAR…VSQYVKGCGV (130 aa)) enclose the C-type lysozyme domain. 4 disulfide bridges follow: cysteine 24-cysteine 146, cysteine 48-cysteine 134, cysteine 83-cysteine 99, and cysteine 95-cysteine 113. Active-site residues include glutamate 53 and aspartate 71.

This sequence belongs to the glycosyl hydrolase 22 family. In terms of assembly, monomer.

It localises to the secreted. The enzyme catalyses Hydrolysis of (1-&gt;4)-beta-linkages between N-acetylmuramic acid and N-acetyl-D-glucosamine residues in a peptidoglycan and between N-acetyl-D-glucosamine residues in chitodextrins.. Its function is as follows. Lysozymes have primarily a bacteriolytic function; those in tissues and body fluids are associated with the monocyte-macrophage system and enhance the activity of immunoagents. Also plays a role in digestion in this species. This is Lysozyme C (LYZ) from Semnopithecus entellus (Northern plains gray langur).